The sequence spans 313 residues: Protein FixB (313 aa).

Residue 255 to 283 participates in FAD binding; the sequence is LYLAVGISGQIQHMVGANASQTIFAINKD.

It belongs to the ETF alpha-subunit/FixB family. In terms of assembly, heterodimer of FixA and FixB.

The protein operates within amine and polyamine metabolism; carnitine metabolism. Functionally, required for anaerobic carnitine reduction. May bring reductant to CaiA. The sequence is that of Protein FixB from Shigella flexneri.